Reading from the N-terminus, the 143-residue chain is MLSPRRTKFRKHHRGRMKGLAARGNQISFGDFALRALEPAWITSRQIESGRRAMTRYAKRGGKIWIRIFPDKPVTMRPAETRMGSGKGSPEYWVAVVKPGKILYEMKGVSETVARAAMRIASYKMPIKTQFITRIETKAPIVE.

Belongs to the universal ribosomal protein uL16 family. Part of the 50S ribosomal subunit.

It is found in the plastid. It localises to the chloroplast. The protein is Large ribosomal subunit protein uL16c of Chlorokybus atmophyticus (Soil alga).